A 183-amino-acid chain; its full sequence is Lipocalin (183 aa).

Residues 1–20 form the signal peptide; the sequence is MKGLVLSFALVALSALCVYG. Cysteine 83 and cysteine 179 are disulfide-bonded.

It belongs to the calycin superfamily. Lipocalin family. In terms of assembly, monomer. As to expression, expressed mainly in choroid plexus. Much lower expression in other brain areas, and absent from liver.

Its subcellular location is the secreted. Might have a transport function across the blood brain barrier. Is supposed to have similar functions as a transthyretin which must have evolved after the stage of the amphibians in evolution. This Rhinella marina (Cane toad) protein is Lipocalin.